Consider the following 104-residue polypeptide: Large ribosomal subunit protein bL21 (104 aa).

The protein belongs to the bacterial ribosomal protein bL21 family. In terms of assembly, part of the 50S ribosomal subunit. Contacts protein L20.

This protein binds to 23S rRNA in the presence of protein L20. The protein is Large ribosomal subunit protein bL21 of Streptococcus uberis (strain ATCC BAA-854 / 0140J).